The sequence spans 371 residues: MPLYIGLMSGTSLDGIDAALVRCGEGRPEWLGATGLPFSAALHDDLLALCLAREVSFAELARLETAFCERQAEAVNRLLLETGTPREAITAIGSHGQTIEHAPNATPAHTYQLDNPSLLAELTGCAVVGDLRRRDLAAGGQAAPLAPAFHAALFTASEAYRLVLNLGGIANLTRLPPSGQAAPVVGFDTGPANMLMDAWSQRHLGHPYDADGAWAASGRVDDALLARLLDDDYFSRLPPKSTGREHFHLDWLTSRLSGHESPCDVQATLAELTAASIAMGVTQCSAGVSTAYDALIPCGGGAHNADLLTRIQRHLPEIPLTPCERFGWSPDWLEAGAFAWLAHQRVAGLPGNLPDVTGARGPRVLGGLYAG.

10–17 is an ATP binding site; it reads GTSLDGID.

This sequence belongs to the anhydro-N-acetylmuramic acid kinase family.

The enzyme catalyses 1,6-anhydro-N-acetyl-beta-muramate + ATP + H2O = N-acetyl-D-muramate 6-phosphate + ADP + H(+). It functions in the pathway amino-sugar metabolism; 1,6-anhydro-N-acetylmuramate degradation. The protein operates within cell wall biogenesis; peptidoglycan recycling. In terms of biological role, catalyzes the specific phosphorylation of 1,6-anhydro-N-acetylmuramic acid (anhMurNAc) with the simultaneous cleavage of the 1,6-anhydro ring, generating MurNAc-6-P. Is required for the utilization of anhMurNAc either imported from the medium or derived from its own cell wall murein, and thus plays a role in cell wall recycling. The sequence is that of Anhydro-N-acetylmuramic acid kinase from Chromohalobacter salexigens (strain ATCC BAA-138 / DSM 3043 / CIP 106854 / NCIMB 13768 / 1H11).